Here is a 297-residue protein sequence, read N- to C-terminus: Halorhodopsin (297 aa).

Residues 1–31 are disordered; it reads MRSRTYHDQSVCGPYGSQRTDCDRDTDAGSD. At 1–45 the chain is on the extracellular side; it reads MRSRTYHDQSVCGPYGSQRTDCDRDTDAGSDTDVHGAQVATQIRT. Residues 46–71 traverse the membrane as a helical segment; sequence DTLLHSSLWVNIALAGLSILVFLYMA. Residues 72 to 77 are Cytoplasmic-facing; it reads RTVRAN. A helical transmembrane segment spans residues 78–101; it reads RARLIVGATLMIPLVSLSSYLGLV. The Extracellular segment spans residues 102–125; that stretch reads TGLTAGPIEMPAAHALAGEDVLSQ. The chain crosses the membrane as a helical span at residues 126–147; that stretch reads WGRYLTWTLSTPMILLALGWLA. Residues 148–150 lie on the Cytoplasmic side of the membrane; the sequence is EVD. Residues 151–174 traverse the membrane as a helical segment; sequence TADLFVVIAADIGMCLTGLAAALT. Residues 175-177 lie on the Extracellular side of the membrane; it reads TSS. Residues 178-200 form a helical membrane-spanning segment; the sequence is YAFRWAFYLVSTAFFVVVLYALL. The Cytoplasmic segment spans residues 201–212; it reads AKWPTNAEAAGT. The chain crosses the membrane as a helical span at residues 213–236; the sequence is GDIFGTLRWLTVILWLGYPILWAL. Topologically, residues 237–246 are extracellular; the sequence is GVEGFALVDS. Residues 247-275 form a helical membrane-spanning segment; that stretch reads VGLTSWGYSLLDIGAKYLFAALLLRWVAN. At K262 the chain carries N6-(retinylidene)lysine. Residues 276–297 are Cytoplasmic-facing; sequence NERTIAVGQRSGRGAIGDPVED.

The protein belongs to the archaeal/bacterial/fungal opsin family.

The protein localises to the cell membrane. Functionally, light-driven chloride pump. The sequence is that of Halorhodopsin (hop) from Haloterrigena sp. (strain arg-4).